We begin with the raw amino-acid sequence, 486 residues long: Maintenance of mitochondrial morphology protein 1 (486 aa).

Topologically, residues 1-23 are lumenal; sequence MSQHSQYDAPGVPVQPSLSFTQG. The chain crosses the membrane as a helical span at residues 24 to 44; sequence FLLGQLSVVLLIGAFIKFFIF. At 45 to 486 the chain is on the cytoplasmic side; the sequence is GEAPAPPSRG…PGSMPGGRAQ (442 aa). Residues 52–103 are disordered; it reads SRGLASRTASHHRSYSINQGDNNVSNNNTSGGSPRTLCEKPSTSNVLRPVPS. The span at 67–84 shows a compositional bias: low complexity; the sequence is SINQGDNNVSNNNTSGGS. The segment covering 92–103 has biased composition (polar residues); that stretch reads PSTSNVLRPVPS. Residues 140 to 389 enclose the SMP-LTD domain; it reads QPESLDWFNV…EPRVQVVGLP (250 aa). Residues 413 to 426 are compositionally biased toward low complexity; that stretch reads AAASASSRGGAPEA. Residues 413–486 form a disordered region; that stretch reads AAASASSRGG…PGSMPGGRAQ (74 aa).

Belongs to the MMM1 family. As to quaternary structure, homodimer. Component of the ER-mitochondria encounter structure (ERMES) or MDM complex, composed of mmm1, mdm10, mdm12 and mdm34. A mmm1 homodimer associates with one molecule of mdm12 on each side in a pairwise head-to-tail manner, and the SMP-LTD domains of mmm1 and mdm12 generate a continuous hydrophobic tunnel for phospholipid trafficking.

Its subcellular location is the endoplasmic reticulum membrane. Component of the ERMES/MDM complex, which serves as a molecular tether to connect the endoplasmic reticulum (ER) and mitochondria. Components of this complex are involved in the control of mitochondrial shape and protein biogenesis, and function in nonvesicular lipid trafficking between the ER and mitochondria. The mdm12-mmm1 subcomplex functions in the major beta-barrel assembly pathway that is responsible for biogenesis of all outer membrane beta-barrel proteins, and acts in a late step after the SAM complex. The mdm10-mdm12-mmm1 subcomplex further acts in the TOM40-specific pathway after the action of the mdm12-mmm1 complex. Essential for establishing and maintaining the structure of mitochondria and maintenance of mtDNA nucleoids. This Talaromyces marneffei (strain ATCC 18224 / CBS 334.59 / QM 7333) (Penicillium marneffei) protein is Maintenance of mitochondrial morphology protein 1.